Here is a 199-residue protein sequence, read N- to C-terminus: Replication protein (199 aa).

It belongs to the Gram-positive plasmids replication protein type 2 family.

In terms of biological role, is essential for plasmid replication. Nicks the positive strand at the plus origin of replication. The polypeptide is Replication protein (repF) (Staphylococcus aureus).